A 337-amino-acid polypeptide reads, in one-letter code: Cobalt-precorrin-5B C(1)-methyltransferase (337 aa).

This sequence belongs to the CbiD family.

It catalyses the reaction Co-precorrin-5B + S-adenosyl-L-methionine = Co-precorrin-6A + S-adenosyl-L-homocysteine. It participates in cofactor biosynthesis; adenosylcobalamin biosynthesis; cob(II)yrinate a,c-diamide from sirohydrochlorin (anaerobic route): step 6/10. Catalyzes the methylation of C-1 in cobalt-precorrin-5B to form cobalt-precorrin-6A. The sequence is that of Cobalt-precorrin-5B C(1)-methyltransferase from Methanoculleus marisnigri (strain ATCC 35101 / DSM 1498 / JR1).